A 1465-amino-acid polypeptide reads, in one-letter code: DNA polymerase III PolC-type (1465 aa).

The region spanning 427-583 (YVVFDVETTG…YDAEATGRLL (157 aa)) is the Exonuclease domain.

The protein belongs to the DNA polymerase type-C family. PolC subfamily.

It is found in the cytoplasm. It catalyses the reaction DNA(n) + a 2'-deoxyribonucleoside 5'-triphosphate = DNA(n+1) + diphosphate. Functionally, required for replicative DNA synthesis. This DNA polymerase also exhibits 3' to 5' exonuclease activity. In Streptococcus pyogenes serotype M5 (strain Manfredo), this protein is DNA polymerase III PolC-type.